Reading from the N-terminus, the 126-residue chain is Small ribosomal subunit protein uS13 (126 aa).

The disordered stretch occupies residues 95–126 (GMPVRGQRTRTNARTRRGRRGQAIGIKKKVKK).

It belongs to the universal ribosomal protein uS13 family. Part of the 30S ribosomal subunit. Forms a loose heterodimer with protein S19. Forms two bridges to the 50S subunit in the 70S ribosome.

Functionally, located at the top of the head of the 30S subunit, it contacts several helices of the 16S rRNA. In the 70S ribosome it contacts the 23S rRNA (bridge B1a) and protein L5 of the 50S subunit (bridge B1b), connecting the 2 subunits; these bridges are implicated in subunit movement. Contacts the tRNAs in the A and P-sites. The polypeptide is Small ribosomal subunit protein uS13 (Chloroflexus aggregans (strain MD-66 / DSM 9485)).